The primary structure comprises 785 residues: Protein SEY1 (785 aa).

The tract at residues 1–31 is disordered; sequence MASAAPINLRAQDTPYVPPTSLPTSSSQTGS. Over 1–689 the chain is Cytoplasmic; sequence MASAAPINLR…KRSTVASIAQ (689 aa). A compositionally biased stretch (low complexity) spans 22 to 31; it reads LPTSSSQTGS. Residues 61 to 281 form the GB1/RHD3-type G domain; that stretch reads GFSYNIVAVF…SSDYLFKPAY (221 aa). 71 to 78 is a GTP binding site; that stretch reads GSQSTGKS. Residues 458-482 adopt a coiled-coil conformation; sequence SWEEELELLRDEIRAVADQCRKDET. A helical transmembrane segment spans residues 690-710; sequence IPYWIYGVLVVLGWNEAMLVL. Residues 711-713 lie on the Lumenal side of the membrane; that stretch reads FNP. The helical transmembrane segment at 714–734 threads the bilayer; it reads LYFAFLLLAMATSYIIAQLGL. Topologically, residues 735-785 are cytoplasmic; the sequence is VGPLFQVTRTVGSEIQRQATARLREHFSQPVLAEPVQVGPSRDREEVGQIQ.

The protein belongs to the TRAFAC class dynamin-like GTPase superfamily. GB1/RHD3 GTPase family. RHD3 subfamily.

The protein localises to the endoplasmic reticulum membrane. Cooperates with the reticulon proteins and tubule-shaping DP1 family proteins to generate and maintain the structure of the tubular endoplasmic reticulum network. Has GTPase activity, which is required for its function in ER organization. The protein is Protein SEY1 of Laccaria bicolor (strain S238N-H82 / ATCC MYA-4686) (Bicoloured deceiver).